A 305-amino-acid chain; its full sequence is Methionyl-tRNA formyltransferase (305 aa).

Ser-108 to Pro-111 is a binding site for (6S)-5,6,7,8-tetrahydrofolate.

The protein belongs to the Fmt family.

The catalysed reaction is L-methionyl-tRNA(fMet) + (6R)-10-formyltetrahydrofolate = N-formyl-L-methionyl-tRNA(fMet) + (6S)-5,6,7,8-tetrahydrofolate + H(+). Its function is as follows. Attaches a formyl group to the free amino group of methionyl-tRNA(fMet). The formyl group appears to play a dual role in the initiator identity of N-formylmethionyl-tRNA by promoting its recognition by IF2 and preventing the misappropriation of this tRNA by the elongation apparatus. The chain is Methionyl-tRNA formyltransferase from Thermus thermophilus (strain ATCC 27634 / DSM 579 / HB8).